We begin with the raw amino-acid sequence, 419 residues long: 3-isopropylmalate dehydratase large subunit (419 aa).

3 residues coordinate [4Fe-4S] cluster: Cys-300, Cys-360, and Cys-363.

The protein belongs to the aconitase/IPM isomerase family. LeuC type 2 subfamily. Heterodimer of LeuC and LeuD. Requires [4Fe-4S] cluster as cofactor.

The enzyme catalyses (2R,3S)-3-isopropylmalate = (2S)-2-isopropylmalate. The protein operates within amino-acid biosynthesis; L-leucine biosynthesis; L-leucine from 3-methyl-2-oxobutanoate: step 2/4. In terms of biological role, catalyzes the isomerization between 2-isopropylmalate and 3-isopropylmalate, via the formation of 2-isopropylmaleate. This is 3-isopropylmalate dehydratase large subunit from Desulfatibacillum aliphaticivorans.